A 793-amino-acid polypeptide reads, in one-letter code: Kinesin-associated protein 3 (793 aa).

Residue serine 60 is modified to Phosphoserine. The span at leucine 103–proline 119 shows a compositional bias: basic and acidic residues. Residues leucine 103 to glycine 123 are disordered. ARM repeat units follow at residues phenylalanine 333 to phenylalanine 373, aspartate 374 to methionine 412, aspartate 494 to isoleucine 533, aspartate 578 to phenylalanine 620, and histidine 621 to glutamate 662.

Interacts with SMC3 subunit of the cohesin complex. Heterotrimer of KIFAP3, KIF3A and KIF3B. Interacts with RAP1GDS1/SMG GDS. Post-translationally, phosphorylated on tyrosine residues by SRC in vitro; this reduces the binding affinity of the protein for RAP1GDS1.

In terms of biological role, involved in tethering the chromosomes to the spindle pole and in chromosome movement. Binds to the tail domain of the KIF3A/KIF3B heterodimer to form a heterotrimeric KIF3 complex and may regulate the membrane binding of this complex. The protein is Kinesin-associated protein 3 (Kifap3) of Mus musculus (Mouse).